Here is a 435-residue protein sequence, read N- to C-terminus: Serine/threonine-protein kinase 40 (435 aa).

The Protein kinase domain maps to 35–332 (FILGPRLGNS…EELDSLSSII (298 aa)). Residues 41–49 (LGNSPVPSI) and Lys66 contribute to the ATP site. The active-site Proton acceptor is Asp197.

Belongs to the protein kinase superfamily. CAMK Ser/Thr protein kinase family.

The protein resides in the nucleus. It localises to the cytoplasm. The catalysed reaction is L-seryl-[protein] + ATP = O-phospho-L-seryl-[protein] + ADP + H(+). The enzyme catalyses L-threonyl-[protein] + ATP = O-phospho-L-threonyl-[protein] + ADP + H(+). In terms of biological role, may be a negative regulator of NF-kappa-B and p53-mediated gene transcription. In Gallus gallus (Chicken), this protein is Serine/threonine-protein kinase 40 (STK40).